The following is a 430-amino-acid chain: Phosphoglucosamine mutase (430 aa).

Residue S93 is the Phosphoserine intermediate of the active site. Residues S93, D227, D229, and D231 each coordinate Mg(2+). At S93 the chain carries Phosphoserine.

The protein belongs to the phosphohexose mutase family. Mg(2+) serves as cofactor. In terms of processing, activated by phosphorylation.

The catalysed reaction is alpha-D-glucosamine 1-phosphate = D-glucosamine 6-phosphate. Its function is as follows. Catalyzes the conversion of glucosamine-6-phosphate to glucosamine-1-phosphate. This Thermosipho africanus (strain TCF52B) protein is Phosphoglucosamine mutase.